Consider the following 377-residue polypeptide: Flagellar P-ring protein (377 aa).

A signal peptide spans 1–33 (MRYPVSTGIAAPAWFAFFCAWAGLWTFSLPVQA).

This sequence belongs to the FlgI family. The basal body constitutes a major portion of the flagellar organelle and consists of four rings (L,P,S, and M) mounted on a central rod.

It localises to the periplasm. The protein resides in the bacterial flagellum basal body. Its function is as follows. Assembles around the rod to form the L-ring and probably protects the motor/basal body from shearing forces during rotation. This Nitrosospira multiformis (strain ATCC 25196 / NCIMB 11849 / C 71) protein is Flagellar P-ring protein.